The sequence spans 239 residues: MVQHLTAEEIIQYISDAKKSTPLKVYINGDFENITFPSDFKVFGSSDSKVIFCEADDWKPFYESNQSVIDEIEVEMDRSNSAIPLKDLTNTNARIEPGAFIREQAIIEDGAVIMMGATINIGAVVGEGTMVDMNATLGGRATTGKNVHVGAGSVLAGVIEPPSASPVVIEDDVLIGANAVILEGVCVGAGAIVAAGAIVTQDVPAGAVVAGTPAKVIKQTTEVEDSKREIVSALRKLND.

Belongs to the transferase hexapeptide repeat family. DapH subfamily.

The enzyme catalyses (S)-2,3,4,5-tetrahydrodipicolinate + acetyl-CoA + H2O = L-2-acetamido-6-oxoheptanedioate + CoA. It participates in amino-acid biosynthesis; L-lysine biosynthesis via DAP pathway; LL-2,6-diaminopimelate from (S)-tetrahydrodipicolinate (acetylase route): step 1/3. Catalyzes the transfer of an acetyl group from acetyl-CoA to tetrahydrodipicolinate. This is 2,3,4,5-tetrahydropyridine-2,6-dicarboxylate N-acetyltransferase from Staphylococcus saprophyticus subsp. saprophyticus (strain ATCC 15305 / DSM 20229 / NCIMB 8711 / NCTC 7292 / S-41).